The sequence spans 576 residues: Zinc finger protein 791 (576 aa).

In terms of domain architecture, KRAB spans V4–V90. 17 consecutive C2H2-type zinc fingers follow at residues Y100–H122, Y132–H154, Y160–H182, Y188–H210, Y216–H238, Y244–H266, Y272–H294, Y300–H322, Y328–H350, Y356–H378, Y384–H406, Y412–H434, Y440–H462, Y468–H490, Y496–H518, Y524–H546, and L552–H574.

This sequence belongs to the krueppel C2H2-type zinc-finger protein family.

It localises to the nucleus. In terms of biological role, may be involved in transcriptional regulation. The chain is Zinc finger protein 791 (ZNF791) from Homo sapiens (Human).